A 78-amino-acid polypeptide reads, in one-letter code: Acyl carrier protein (78 aa).

The region spanning 2-77 (SDIAERVKKI…DAIKFLEKNA (76 aa)) is the Carrier domain. An O-(pantetheine 4'-phosphoryl)serine modification is found at S37.

This sequence belongs to the acyl carrier protein (ACP) family. 4'-phosphopantetheine is transferred from CoA to a specific serine of apo-ACP by AcpS. This modification is essential for activity because fatty acids are bound in thioester linkage to the sulfhydryl of the prosthetic group.

It is found in the cytoplasm. It participates in lipid metabolism; fatty acid biosynthesis. Its function is as follows. Carrier of the growing fatty acid chain in fatty acid biosynthesis. This is Acyl carrier protein from Azorhizobium caulinodans (strain ATCC 43989 / DSM 5975 / JCM 20966 / LMG 6465 / NBRC 14845 / NCIMB 13405 / ORS 571).